The sequence spans 391 residues: Beta sliding clamp (391 aa).

The protein belongs to the beta sliding clamp family. As to quaternary structure, forms a ring-shaped head-to-tail homodimer around DNA which binds and tethers DNA polymerases and other proteins to the DNA. The DNA replisome complex has a single clamp-loading complex (3 tau and 1 each of delta, delta', psi and chi subunits) which binds 3 Pol III cores (1 core on the leading strand and 2 on the lagging strand) each with a beta sliding clamp dimer. Additional proteins in the replisome are other copies of gamma, psi and chi, Ssb, DNA helicase and RNA primase.

It localises to the cytoplasm. Confers DNA tethering and processivity to DNA polymerases and other proteins. Acts as a clamp, forming a ring around DNA (a reaction catalyzed by the clamp-loading complex) which diffuses in an ATP-independent manner freely and bidirectionally along dsDNA. Initially characterized for its ability to contact the catalytic subunit of DNA polymerase III (Pol III), a complex, multichain enzyme responsible for most of the replicative synthesis in bacteria; Pol III exhibits 3'-5' exonuclease proofreading activity. The beta chain is required for initiation of replication as well as for processivity of DNA replication. This Synechocystis sp. (strain ATCC 27184 / PCC 6803 / Kazusa) protein is Beta sliding clamp (dnaN).